We begin with the raw amino-acid sequence, 227 residues long: MAYPLQMGLQDATSPIMEELLHFHDHTLMIVFLISSLVLYIISLMLTTKLTHTSTMDAQEVETVWTILPAIILILIALPSLRILYMMDEINNPSLTVKTMGHQWYWSYEYTDYEDLNFDSYMIPTQELKPGELRLLEVDNRVVLPMEMTIRMLISSEDVLHSWAVPSLGLKTDAIPGRLNQTTLMAMRPGLYYGQCSEICGSNHSFMPIVLELVPLSHFEKWSTSML.

At 1–14 the chain is on the mitochondrial intermembrane side; sequence MAYPLQMGLQDATS. The helical transmembrane segment at 15–45 threads the bilayer; it reads PIMEELLHFHDHTLMIVFLISSLVLYIISLM. The Mitochondrial matrix segment spans residues 46–59; the sequence is LTTKLTHTSTMDAQ. A helical transmembrane segment spans residues 60-87; sequence EVETVWTILPAIILILIALPSLRILYMM. Residues 88–227 lie on the Mitochondrial intermembrane side of the membrane; it reads DEINNPSLTV…HFEKWSTSML (140 aa). Residues His161, Cys196, Glu198, Cys200, His204, and Met207 each coordinate Cu cation. Glu198 provides a ligand contact to Mg(2+).

This sequence belongs to the cytochrome c oxidase subunit 2 family. In terms of assembly, component of the cytochrome c oxidase (complex IV, CIV), a multisubunit enzyme composed of 14 subunits. The complex is composed of a catalytic core of 3 subunits MT-CO1, MT-CO2 and MT-CO3, encoded in the mitochondrial DNA, and 11 supernumerary subunits COX4I, COX5A, COX5B, COX6A, COX6B, COX6C, COX7A, COX7B, COX7C, COX8 and NDUFA4, which are encoded in the nuclear genome. The complex exists as a monomer or a dimer and forms supercomplexes (SCs) in the inner mitochondrial membrane with NADH-ubiquinone oxidoreductase (complex I, CI) and ubiquinol-cytochrome c oxidoreductase (cytochrome b-c1 complex, complex III, CIII), resulting in different assemblies (supercomplex SCI(1)III(2)IV(1) and megacomplex MCI(2)III(2)IV(2)). Found in a complex with TMEM177, COA6, COX18, COX20, SCO1 and SCO2. Interacts with TMEM177 in a COX20-dependent manner. Interacts with COX20. Interacts with COX16. It depends on Cu cation as a cofactor.

Its subcellular location is the mitochondrion inner membrane. The enzyme catalyses 4 Fe(II)-[cytochrome c] + O2 + 8 H(+)(in) = 4 Fe(III)-[cytochrome c] + 2 H2O + 4 H(+)(out). In terms of biological role, component of the cytochrome c oxidase, the last enzyme in the mitochondrial electron transport chain which drives oxidative phosphorylation. The respiratory chain contains 3 multisubunit complexes succinate dehydrogenase (complex II, CII), ubiquinol-cytochrome c oxidoreductase (cytochrome b-c1 complex, complex III, CIII) and cytochrome c oxidase (complex IV, CIV), that cooperate to transfer electrons derived from NADH and succinate to molecular oxygen, creating an electrochemical gradient over the inner membrane that drives transmembrane transport and the ATP synthase. Cytochrome c oxidase is the component of the respiratory chain that catalyzes the reduction of oxygen to water. Electrons originating from reduced cytochrome c in the intermembrane space (IMS) are transferred via the dinuclear copper A center (CU(A)) of subunit 2 and heme A of subunit 1 to the active site in subunit 1, a binuclear center (BNC) formed by heme A3 and copper B (CU(B)). The BNC reduces molecular oxygen to 2 water molecules using 4 electrons from cytochrome c in the IMS and 4 protons from the mitochondrial matrix. This is Cytochrome c oxidase subunit 2 (MT-CO2) from Halichoerus grypus (Gray seal).